Here is a 172-residue protein sequence, read N- to C-terminus: MKRDKKEQIVQDVAEKIDRSQGIYLTEFQGLSVAKMAELRNEFRKAGVEYRVVKNTLIKKALRDLSSADRLASGLKSTTAVAFGYDDPLAPAKIIRKFSKTNEALKFKMASIDGVVYDADSLPALSEMLSKTENIGRAAGLINGVVSSVPMVVNAVARNLVSVLDQIAKQKQ.

The protein belongs to the universal ribosomal protein uL10 family. As to quaternary structure, part of the ribosomal stalk of the 50S ribosomal subunit. The N-terminus interacts with L11 and the large rRNA to form the base of the stalk. The C-terminus forms an elongated spine to which L12 dimers bind in a sequential fashion forming a multimeric L10(L12)X complex.

In terms of biological role, forms part of the ribosomal stalk, playing a central role in the interaction of the ribosome with GTP-bound translation factors. The protein is Large ribosomal subunit protein uL10 of Chlorobium phaeobacteroides (strain DSM 266 / SMG 266 / 2430).